The primary structure comprises 122 residues: Large ribosomal subunit protein uL14 (122 aa).

Belongs to the universal ribosomal protein uL14 family. In terms of assembly, part of the 50S ribosomal subunit. Forms a cluster with proteins L3 and L19. In the 70S ribosome, L14 and L19 interact and together make contacts with the 16S rRNA in bridges B5 and B8.

Its function is as follows. Binds to 23S rRNA. Forms part of two intersubunit bridges in the 70S ribosome. The protein is Large ribosomal subunit protein uL14 of Desulfovibrio desulfuricans (strain ATCC 27774 / DSM 6949 / MB).